We begin with the raw amino-acid sequence, 444 residues long: Phosphoglucosamine mutase (444 aa).

The active-site Phosphoserine intermediate is S102. Mg(2+)-binding residues include S102, D241, D243, and D245. The residue at position 102 (S102) is a Phosphoserine.

Belongs to the phosphohexose mutase family. It depends on Mg(2+) as a cofactor. Post-translationally, activated by phosphorylation.

It catalyses the reaction alpha-D-glucosamine 1-phosphate = D-glucosamine 6-phosphate. In terms of biological role, catalyzes the conversion of glucosamine-6-phosphate to glucosamine-1-phosphate. This Glaesserella parasuis serovar 5 (strain SH0165) (Haemophilus parasuis) protein is Phosphoglucosamine mutase.